The following is a 195-amino-acid chain: Rubrerythrin-1 (195 aa).

Residues 3-150 (SLKGTKTAEN…ALLKNIEENK (148 aa)) enclose the Ferritin-like diiron domain. Residues Glu20, Glu53, Glu98, Glu101, Glu132, His135, Cys162, Cys165, Cys178, and Cys181 each coordinate Fe(3+). The 35-residue stretch at 157–191 (VKFWKCIKCGYIFEGKTAPKVCPACLHPQAYFEIL) folds into the Rubredoxin-like domain.

As to quaternary structure, homodimer. It depends on Fe(3+) as a cofactor.

It carries out the reaction H2O2 + NADH + H(+) = NAD(+) + 2 H2O. Its activity is regulated as follows. Rubredoxin (Rd) increases the NADH consumption rate by serving as an intermediary electron-transfer shuttle between NROR and RubY. Functions as the terminal component of an NADH peroxidase (NADH:H(2)O(2) oxidoreductase) when using NADH:rubredoxin oxidoreductase (NROR) as the electron transport intermediary from NADH to RubY. This is Rubrerythrin-1 (rbr1) from Clostridium acetobutylicum (strain ATCC 824 / DSM 792 / JCM 1419 / IAM 19013 / LMG 5710 / NBRC 13948 / NRRL B-527 / VKM B-1787 / 2291 / W).